A 351-amino-acid chain; its full sequence is DNA polymerase IV (351 aa).

Residues 3 to 187 (ILFVDFDYFF…IDIDEVPGVG (185 aa)) form the UmuC domain. The Mg(2+) site is built by aspartate 7 and aspartate 105. Glutamate 106 is a catalytic residue.

This sequence belongs to the DNA polymerase type-Y family. Requires Mg(2+) as cofactor.

The catalysed reaction is DNA(n) + a 2'-deoxyribonucleoside 5'-triphosphate = DNA(n+1) + diphosphate. Poorly processive, error-prone DNA polymerase involved in untargeted mutagenesis. Copies undamaged DNA at stalled replication forks, which arise in vivo from mismatched or misaligned primer ends. These misaligned primers can be extended by PolIV. Exhibits no 3'-5' exonuclease (proofreading) activity. May be involved in translesional synthesis. In Sulfurisphaera tokodaii (strain DSM 16993 / JCM 10545 / NBRC 100140 / 7) (Sulfolobus tokodaii), this protein is DNA polymerase IV.